We begin with the raw amino-acid sequence, 190 residues long: Imidazoleglycerol-phosphate dehydratase (190 aa).

The protein belongs to the imidazoleglycerol-phosphate dehydratase family.

Its subcellular location is the cytoplasm. The enzyme catalyses D-erythro-1-(imidazol-4-yl)glycerol 3-phosphate = 3-(imidazol-4-yl)-2-oxopropyl phosphate + H2O. Its pathway is amino-acid biosynthesis; L-histidine biosynthesis; L-histidine from 5-phospho-alpha-D-ribose 1-diphosphate: step 6/9. This chain is Imidazoleglycerol-phosphate dehydratase, found in Aliarcobacter butzleri (strain RM4018) (Arcobacter butzleri).